Here is a 435-residue protein sequence, read N- to C-terminus: Deoxybrevianamide E synthase (435 aa).

Residues 1 to 28 (MTAPELRAPAGHPQEPPARSSPAQALSS) form a disordered region. Glu96 is a brevianamide F binding site. Positions 110, 195, 197, 265, 267, 354, 419, and 423 each coordinate dimethylallyl diphosphate.

Belongs to the tryptophan dimethylallyltransferase family. Monomer.

The enzyme catalyses brevianamide F + dimethylallyl diphosphate = deoxybrevianamide E + diphosphate. It functions in the pathway alkaloid biosynthesis. In terms of biological role, deoxybrevianamide E synthase; part of the gene cluster that mediates the biosynthesis of notoamide, a fungal indole alkaloid that belongs to a family of natural products containing a characteristic bicyclo[2.2.2]diazaoctane core. The first step of notoamide biosynthesis involves coupling of L-proline and L-tryptophan by the bimodular NRPS notE', to produce cyclo-L-tryptophan-L-proline called brevianamide F. The reverse prenyltransferase notF' then acts as a deoxybrevianamide E synthase and converts brevianamide F to deoxybrevianamide E via reverse prenylation at C-2 of the indole ring leading to the bicyclo[2.2.2]diazaoctane core. Deoxybrevianamide E is further hydroxylated at C-6 of the indole ring, likely catalyzed by the cytochrome P450 monooxygenase notG', to yield 6-hydroxy-deoxybrevianamide E. 6-hydroxy-deoxybrevianamide E is a specific substrate of the prenyltransferase notC' for normal prenylation at C-7 to produce 6-hydroxy-7-prenyl-deoxybrevianamide, also called notoamide S. As the proposed pivotal branching point in notoamide biosynthesis, notoamide S can be diverted to notoamide E through an oxidative pyran ring closure putatively catalyzed by either notH' cytochrome P450 monooxygenase or the notD' FAD-linked oxidoreductase. This step would be followed by an indole 2,3-epoxidation-initiated pinacol-like rearrangement catalyzed by the notB' FAD-dependent monooxygenase leading to the formation of notoamide C and notoamide D. On the other hand notoamide S is converted to notoamide T by notH' (or notD'), a bifunctional oxidase that also functions as the intramolecular Diels-Alderase responsible for generation of (-)-notoamide T. To generate antipodal (+)-notoaminide T, notH (or notD) in Aspergillus strain MF297-2 is expected to catalyze a Diels-Alder reaction leading to the opposite stereochemistry. The remaining oxidoreductase notD' (or notH') likely catalyzes the oxidative pyran ring formation to yield (-)-stephacidin A. The FAD-dependent monooxygenase notI' is highly similar to notB' and is predicted to catalyze a similar conversion from (-)-stephacidin A to (+)-notoamide B via the 2,3-epoxidation of (-)-stephacidin A followed by a pinacol-type rearrangement. Finally, it remains unclear which enzyme could be responsible for the final hydroxylation steps leading to notoamide A and sclerotiamide. This chain is Deoxybrevianamide E synthase, found in Aspergillus versicolor.